Consider the following 6995-residue polypeptide: Fibrous sheath-interacting protein 2 (6995 aa).

3 disordered regions span residues 273 to 292, 308 to 336, and 351 to 476; these read EQKI…RKKQ, DTGL…SSKK, and GDQK…TDAP. Residues 359–396 show a composition bias toward polar residues; it reads TSGQVSATVNQSQSSSKDVTKVSASSVTYPAEVQNSSS. The span at 397 to 421 shows a compositional bias: basic and acidic residues; that stretch reads EQKRSEVTKRLSDERGKNSTDDSAR. A compositionally biased stretch (polar residues) spans 424–442; sequence IISTQLSPTRNAKLSQISL. At serine 430 the chain carries Phosphoserine. Basic and acidic residues predominate over residues 443–452; sequence DHQKEEKEMK. Residues 453–463 show a composition bias toward polar residues; that stretch reads STWNGGLSKKS. The stretch at 665 to 692 forms a coiled coil; it reads LEISLLYDKKAKAMDQIKNLKNVFVNFK. Disordered stretches follow at residues 1452–1472, 2554–2595, 2699–2731, 3182–3270, 5489–5665, 5719–5740, 5823–5878, 5943–5996, and 6973–6995; these read PDPQ…DPPT, KSKR…VPQM, TKTK…TPQV, PVKM…PNFT, GPSA…KYKG, SKSS…MTEK, KDLS…SKSK, KEDE…PDKL, and SKVF…QDKR. Residues 2555–2565 are compositionally biased toward basic and acidic residues; the sequence is SKREGEMHDSS. Polar residues predominate over residues 3187–3204; the sequence is PSNTSDTPRTRRSSQGSV. The span at 3220–3231 shows a compositional bias: low complexity; sequence SVTSNSSSHISS. Residues 3232-3250 show a composition bias toward polar residues; that stretch reads CVENTNKSLEPMGRSNSEA. Residues 3255–3265 are compositionally biased toward basic residues; that stretch reads SRHKAHDHGQR. Over residues 5496 to 5509 the composition is skewed to basic and acidic residues; sequence DAKKEDESKVKPAT. Composition is skewed to polar residues over residues 5523–5557, 5565–5625, and 5638–5650; these read MKSQ…SPPT, QVQQ…QSAM, and VQES…TTMK. Composition is skewed to basic and acidic residues over residues 5719–5738 and 5829–5877; these read SKSS…ETMT and GHRD…ESKS. The segment covering 5982-5993 has biased composition (polar residues); the sequence is SDVQKTPEQSSP. Low complexity predominate over residues 6977–6995; sequence SRSSGSIPKSSSPPHQDKR.

As to quaternary structure, may interact with AKAP4. Predominantly expressed in testis.

Plays a role in spermatogenesis. The sequence is that of Fibrous sheath-interacting protein 2 (Fsip2) from Mus musculus (Mouse).